Reading from the N-terminus, the 415-residue chain is DNA primase DnaG (415 aa).

The 80-residue stretch at 171-250 folds into the Toprim domain; sequence DAIIIVEGRA…AFSPRGKSVE (80 aa). Mg(2+) is bound by residues E177, D219, and D221. Positions 280–323 are disordered; the sequence is ELPGDLGGRPARTAPAHDEGGNSDTTGKQAVSQKRIRDGTSKVP. Polar residues predominate over residues 301 to 311; sequence NSDTTGKQAVS.

Belongs to the archaeal DnaG primase family. As to quaternary structure, forms a ternary complex with MCM helicase and DNA. The cofactor is Mg(2+).

It catalyses the reaction ssDNA + n NTP = ssDNA/pppN(pN)n-1 hybrid + (n-1) diphosphate.. In terms of biological role, RNA polymerase that catalyzes the synthesis of short RNA molecules used as primers for DNA polymerase during DNA replication. The chain is DNA primase DnaG from Methanoregula boonei (strain DSM 21154 / JCM 14090 / 6A8).